Consider the following 465-residue polypeptide: A-type ATP synthase subunit B (465 aa).

The protein belongs to the ATPase alpha/beta chains family. In terms of assembly, has multiple subunits with at least A(3), B(3), C, D, E, F, H, I and proteolipid K(x).

It is found in the cell membrane. Its function is as follows. Component of the A-type ATP synthase that produces ATP from ADP in the presence of a proton gradient across the membrane. The B chain is a regulatory subunit. The chain is A-type ATP synthase subunit B from Sulfurisphaera tokodaii (strain DSM 16993 / JCM 10545 / NBRC 100140 / 7) (Sulfolobus tokodaii).